A 345-amino-acid polypeptide reads, in one-letter code: 2-oxoglutarate and iron-dependent oxygenase domain-containing protein 2 (345 aa).

One can recognise a Fe2OG dioxygenase domain in the interval aspartate 207–alanine 301. Fe cation is bound by residues histidine 227, aspartate 229, and histidine 282. Arginine 292 contacts 2-oxoglutarate.

Belongs to the OGFOD2 family. It depends on Fe(2+) as a cofactor. Requires L-ascorbate as cofactor.

The sequence is that of 2-oxoglutarate and iron-dependent oxygenase domain-containing protein 2 (ogfod2) from Danio rerio (Zebrafish).